A 563-amino-acid polypeptide reads, in one-letter code: Phosphomethylpyrimidine synthase (563 aa).

Residues 95 to 115 (PGKNPSPMNNRTPVRAKQGKS) are disordered. Residues N200, M229, Y258, H294, 314–316 (SRG), 355–358 (DALR), and E394 each bind substrate. H398 is a binding site for Zn(2+). Y421 is a binding site for substrate. H462 contributes to the Zn(2+) binding site. [4Fe-4S] cluster-binding residues include C544, C547, and C552.

It belongs to the ThiC family. The cofactor is [4Fe-4S] cluster.

The enzyme catalyses 5-amino-1-(5-phospho-beta-D-ribosyl)imidazole + S-adenosyl-L-methionine = 4-amino-2-methyl-5-(phosphooxymethyl)pyrimidine + CO + 5'-deoxyadenosine + formate + L-methionine + 3 H(+). The protein operates within cofactor biosynthesis; thiamine diphosphate biosynthesis. In terms of biological role, catalyzes the synthesis of the hydroxymethylpyrimidine phosphate (HMP-P) moiety of thiamine from aminoimidazole ribotide (AIR) in a radical S-adenosyl-L-methionine (SAM)-dependent reaction. The chain is Phosphomethylpyrimidine synthase from Chlorobium phaeobacteroides (strain BS1).